The sequence spans 393 residues: Actin-related protein 2 (393 aa).

Residues 158-160 (GDG), 212-216 (RQMKE), and 303-308 (GGTTMY) each bind ATP.

This sequence belongs to the actin family. ARP2 subfamily. Component of the Arp2/3 complex.

The protein resides in the cytoplasm. It localises to the cytoskeleton. Functionally, functions as ATP-binding component of the Arp2/3 complex which is involved in regulation of actin polymerization and together with an activating nucleation-promoting factor (NPF) mediates the formation of branched actin networks. Seems to contact the pointed end of the daughter actin filament. The chain is Actin-related protein 2 (arx-2) from Caenorhabditis briggsae.